The primary structure comprises 149 residues: ATP synthase epsilon chain (149 aa).

Composition is skewed to basic and acidic residues over residues 99–116 and 123–134; these read DVER…RLEE and RETHEAARDRAR. The segment at 99–149 is disordered; the sequence is DVERAESAEERAKRRLEEGVQEEERETHEAARDRARNRLRVAMGKVGTRQS.

The protein belongs to the ATPase epsilon chain family. In terms of assembly, F-type ATPases have 2 components, CF(1) - the catalytic core - and CF(0) - the membrane proton channel. CF(1) has five subunits: alpha(3), beta(3), gamma(1), delta(1), epsilon(1). CF(0) has three main subunits: a, b and c.

The protein localises to the cell inner membrane. In terms of biological role, produces ATP from ADP in the presence of a proton gradient across the membrane. The polypeptide is ATP synthase epsilon chain (Salinibacter ruber (strain DSM 13855 / M31)).